The primary structure comprises 747 residues: NAD-dependent protein deacetylase sirtuin-1 (747 aa).

The disordered stretch occupies residues 1–135 (MADEAALALQ…DDEGEEEEEA (135 aa)). At A2 the chain carries N-acetylalanine. The interaction with CLOCK stretch occupies residues 2–139 (ADEAALALQP…EEEEEAAAAA (138 aa)). The tract at residues 2–268 (ADEAALALQP…LTGAGVSVSC (267 aa)) is interaction with H1-4. S14 and S26 each carry phosphoserine. S27 carries the post-translational modification Phosphoserine; by MAPK8. Positions 32–39 (PLRKRPRR) match the Nuclear localization signal motif. Residue S47 is modified to Phosphoserine; by MAPK8. The span at 61 to 100 (PAAARGCPGAAAAALWREAEAEAAAAGGEQEAQATAAAGE) shows a compositional bias: low complexity. Over residues 120–135 (LYDEDDDDEGEEEEEA) the composition is skewed to acidic residues. The Nuclear export signal motif lies at 138 to 145 (AAIGYRDN). An interaction with CCAR2 region spans residues 143 to 541 (RDNLLFGDEI…LHVSEDSSSP (399 aa)). Phosphoserine occurs at positions 159, 162, 172, and 173. Residues 223-230 (IVINILSE) carry the Nuclear localization signal motif. A Deacetylase sirtuin-type domain is found at 236-496 (KRKDINTIED…NELCHRLGGE (261 aa)). N6-acetyllysine is present on K238. Residues 256 to 259 (IIVL) are required for interaction with the sumoylated form of CCAR2. NAD(+) is bound by residues 261 to 280 (GAGV…DGIY) and 345 to 348 (QNID). H363 serves as the catalytic Proton acceptor. Residues C371 and C374 each contribute to the Zn(2+) site. Residue K377 is modified to N6-acetyllysine. Residues C395 and C398 each contribute to the Zn(2+) site. Residues C395 and C398 each carry the S-nitrosocysteine modification. Residues 425–431 (AMKYDKD) carry the Nuclear export signal motif. N6-acetyllysine is present on K430. Residues 440 to 442 (GSS), 465 to 467 (NRE), and C482 contribute to the NAD(+) site. K513 carries the N6-acetyllysine modification. Disordered regions lie at residues 523–549 (YLSE…PPDS) and 562–587 (SNDD…TSRN). T530 carries the phosphothreonine; by DYRK1A, DYRK3 and MAPK8 modification. The residue at position 535 (S535) is a Phosphoserine. Residues 537–549 (DSSSPERTSPPDS) show a composition bias toward polar residues. The tract at residues 538–540 (SSS) is phosphorylated at one of three serine residues. A Phosphothreonine modification is found at T544. Residue S545 is modified to Phosphoserine. A compositionally biased stretch (basic and acidic residues) spans 569-580 (SESKGCMEEKPQ). K610 carries the post-translational modification N6-acetyllysine. Residues S659 and S661 each carry the phosphoserine; by CaMK2 modification. Residues 663–726 (DDVLSSSSCG…FGTDGDDQEA (64 aa)) are disordered. Low complexity predominate over residues 666 to 677 (LSSSSCGSNSDS). Over residues 687–707 (EPMEDESEIEEFYNGLEDEPD) the composition is skewed to acidic residues. T719 bears the Phosphothreonine mark. Phosphoserine is present on S747.

The protein belongs to the sirtuin family. Class I subfamily. Interacts with XBP1 isoform 2. Found in a complex with PCAF and MYOD1. Interacts with FOXO1; the interaction deacetylates FOXO1, resulting in its nuclear retention and promotion of its transcriptional activity Component of the eNoSC complex, composed of SIRT1, SUV39H1 and RRP8. Interacts with HES1, HEY2 and PML. Interacts with RPS19BP1/AROS. Interacts with CCAR2 (via N-terminus); the interaction disrupts the interaction between SIRT1 and p53/TP53. Interacts with SETD7; the interaction induces the dissociation of SIRT1 from p53/TP53 and increases p53/TP53 activity. Interacts with MYCN, NR1I2, CREBZF, TSC2, TLE1, FOS, JUN, NR0B2, PPARG, NCOR, IRS1, IRS2 and NMNAT1. Interacts with HNF1A; the interaction occurs under nutrient restriction. Interacts with SUZ12; the interaction mediates the association with the PRC4 histone methylation complex which is specific as an association with PCR2 and PCR3 complex variants is not found. Interacts with BCL6; leads to a epigenetic repression of specific target genes. Interacts with CLOCK, BMAL1 and PER2. Interacts with PPARA; the interaction seems to be modulated by NAD(+) levels. Interacts with NR1H3 and this interaction is inhibited in the presence of CCAR2. Interacts with CHEK2. Interacts with p53/TP53. Exhibits a preferential interaction with sumoylated CCAR2 over its unmodified form. Interacts with PACS2. Interacts with SIRT7. Interacts with PUS7. Interacts with TULP3. Interacts with MORN3; the interaction enhances the ubiquitination of p53/TP53. In terms of assembly, (Microbial infection) Interacts with HIV-1 Tat. Requires Zn(2+) as cofactor. Methylated on multiple lysine residues; methylation is enhanced after DNA damage and is dispensable for deacetylase activity toward p53/TP53. Post-translationally, phosphorylated. Phosphorylated by STK4/MST1, resulting in inhibition of SIRT1-mediated p53/TP53 deacetylation. Phosphorylation by MAPK8/JNK1 at Ser-27, Ser-47, and Thr-530 leads to increased nuclear localization and enzymatic activity. Phosphorylation at Thr-530 by DYRK1A and DYRK3 activates deacetylase activity and promotes cell survival. Phosphorylation by mammalian target of rapamycin complex 1 (mTORC1) at Ser-47 inhibits deacetylation activity. Phosphorylated by CaMK2, leading to increased p53/TP53 and NF-kappa-B p65/RELA deacetylation activity. Phosphorylation at Ser-27 implicating MAPK9 is linked to protein stability. There is some ambiguity for some phosphosites: Ser-159/Ser-162 and Thr-544/Ser-545. In terms of processing, proteolytically cleaved by cathepsin B upon TNF-alpha treatment to yield catalytic inactive but stable SirtT1 75 kDa fragment (75SirT1). S-nitrosylated by GAPDH, leading to inhibit the NAD-dependent protein deacetylase activity. Post-translationally, acetylated at various Lys residues. Deacetylated via an autocatalytic mechanism. Autodeacetylation at Lys-238 promotes its protein deacetylase activity. In terms of processing, ubiquitinated; leading to degradation. Deubiquitinated by USP22; leading to stabilization. Widely expressed.

The protein localises to the nucleus. The protein resides in the PML body. It is found in the cytoplasm. It localises to the mitochondrion. The enzyme catalyses N(6)-acetyl-L-lysyl-[protein] + NAD(+) + H2O = 2''-O-acetyl-ADP-D-ribose + nicotinamide + L-lysyl-[protein]. The catalysed reaction is N(6)-propanoyl-L-lysyl-[protein] + NAD(+) + H2O = 3''-O-propanoyl-ADP-D-ribose + nicotinamide + L-lysyl-[protein]. It catalyses the reaction N(6)-(2E)-butenoyl-L-lysyl-[protein] + NAD(+) + H2O = 2''-O-(2E)-but-2-enoyl-ADP-D-ribose + nicotinamide + L-lysyl-[protein]. It carries out the reaction N(6)-[(S)-lactoyl]-L-lysyl-[protein] + NAD(+) + H2O = 2''-O-(S)-lactoyl-ADP-D-ribose + nicotinamide + L-lysyl-[protein]. Its activity is regulated as follows. Inhibited by nicotinamide. Activated by resveratrol (3,5,4'-trihydroxy-trans-stilbene), butein (3,4,2',4'-tetrahydroxychalcone), piceatannol (3,5,3',4'-tetrahydroxy-trans-stilbene), Isoliquiritigenin (4,2',4'-trihydroxychalcone), fisetin (3,7,3',4'-tetrahydroxyflavone) and quercetin (3,5,7,3',4'-pentahydroxyflavone). MAPK8/JNK1 and RPS19BP1/AROS act as positive regulators of deacetylation activity. Negatively regulated by CCAR2. Its function is as follows. NAD-dependent protein deacetylase that links transcriptional regulation directly to intracellular energetics and participates in the coordination of several separated cellular functions such as cell cycle, response to DNA damage, metabolism, apoptosis and autophagy. Can modulate chromatin function through deacetylation of histones and can promote alterations in the methylation of histones and DNA, leading to transcriptional repression. Deacetylates a broad range of transcription factors and coregulators, thereby regulating target gene expression positively and negatively. Serves as a sensor of the cytosolic ratio of NAD(+)/NADH which is altered by glucose deprivation and metabolic changes associated with caloric restriction. Is essential in skeletal muscle cell differentiation and in response to low nutrients mediates the inhibitory effect on skeletal myoblast differentiation which also involves 5'-AMP-activated protein kinase (AMPK) and nicotinamide phosphoribosyltransferase (NAMPT). Component of the eNoSC (energy-dependent nucleolar silencing) complex, a complex that mediates silencing of rDNA in response to intracellular energy status and acts by recruiting histone-modifying enzymes. The eNoSC complex is able to sense the energy status of cell: upon glucose starvation, elevation of NAD(+)/NADP(+) ratio activates SIRT1, leading to histone H3 deacetylation followed by dimethylation of H3 at 'Lys-9' (H3K9me2) by SUV39H1 and the formation of silent chromatin in the rDNA locus. Deacetylates 'Lys-266' of SUV39H1, leading to its activation. Inhibits skeletal muscle differentiation by deacetylating PCAF and MYOD1. Deacetylates H2A and 'Lys-26' of H1-4. Deacetylates 'Lys-16' of histone H4 (in vitro). Involved in NR0B2/SHP corepression function through chromatin remodeling: Recruited to LRH1 target gene promoters by NR0B2/SHP thereby stimulating histone H3 and H4 deacetylation leading to transcriptional repression. Proposed to contribute to genomic integrity via positive regulation of telomere length; however, reports on localization to pericentromeric heterochromatin are conflicting. Proposed to play a role in constitutive heterochromatin (CH) formation and/or maintenance through regulation of the available pool of nuclear SUV39H1. Upon oxidative/metabolic stress decreases SUV39H1 degradation by inhibiting SUV39H1 polyubiquitination by MDM2. This increase in SUV39H1 levels enhances SUV39H1 turnover in CH, which in turn seems to accelerate renewal of the heterochromatin which correlates with greater genomic integrity during stress response. Deacetylates 'Lys-382' of p53/TP53 and impairs its ability to induce transcription-dependent proapoptotic program and modulate cell senescence. Deacetylates TAF1B and thereby represses rDNA transcription by the RNA polymerase I. Deacetylates MYC, promotes the association of MYC with MAX and decreases MYC stability leading to compromised transformational capability. Deacetylates FOXO3 in response to oxidative stress thereby increasing its ability to induce cell cycle arrest and resistance to oxidative stress but inhibiting FOXO3-mediated induction of apoptosis transcriptional activity; also leading to FOXO3 ubiquitination and protesomal degradation. Appears to have a similar effect on MLLT7/FOXO4 in regulation of transcriptional activity and apoptosis. Deacetylates DNMT1; thereby impairs DNMT1 methyltransferase-independent transcription repressor activity, modulates DNMT1 cell cycle regulatory function and DNMT1-mediated gene silencing. Deacetylates RELA/NF-kappa-B p65 thereby inhibiting its transactivating potential and augments apoptosis in response to TNF-alpha. Deacetylates HIF1A, KAT5/TIP60, RB1 and HIC1. Deacetylates FOXO1 resulting in its nuclear retention and enhancement of its transcriptional activity leading to increased gluconeogenesis in liver. Inhibits E2F1 transcriptional activity and apoptotic function, possibly by deacetylation. Involved in HES1- and HEY2-mediated transcriptional repression. In cooperation with MYCN seems to be involved in transcriptional repression of DUSP6/MAPK3 leading to MYCN stabilization by phosphorylation at 'Ser-62'. Deacetylates MEF2D. Required for antagonist-mediated transcription suppression of AR-dependent genes which may be linked to local deacetylation of histone H3. Represses HNF1A-mediated transcription. Required for the repression of ESRRG by CREBZF. Deacetylates NR1H3 and NR1H2 and deacetylation of NR1H3 at 'Lys-434' positively regulates transcription of NR1H3:RXR target genes, promotes NR1H3 proteasomal degradation and results in cholesterol efflux; a promoter clearing mechanism after reach round of transcription is proposed. Involved in lipid metabolism: deacetylates LPIN1, thereby inhibiting diacylglycerol synthesis. Implicated in regulation of adipogenesis and fat mobilization in white adipocytes by repression of PPARG which probably involves association with NCOR1 and SMRT/NCOR2. Deacetylates p300/EP300 and PRMT1. Deacetylates ACSS2 leading to its activation, and HMGCS1 deacetylation. Involved in liver and muscle metabolism. Through deacetylation and activation of PPARGC1A is required to activate fatty acid oxidation in skeletal muscle under low-glucose conditions and is involved in glucose homeostasis. Involved in regulation of PPARA and fatty acid beta-oxidation in liver. Involved in positive regulation of insulin secretion in pancreatic beta cells in response to glucose; the function seems to imply transcriptional repression of UCP2. Proposed to deacetylate IRS2 thereby facilitating its insulin-induced tyrosine phosphorylation. Deacetylates SREBF1 isoform SREBP-1C thereby decreasing its stability and transactivation in lipogenic gene expression. Involved in DNA damage response by repressing genes which are involved in DNA repair, such as XPC and TP73, deacetylating XRCC6/Ku70, and facilitating recruitment of additional factors to sites of damaged DNA, such as SIRT1-deacetylated NBN can recruit ATM to initiate DNA repair and SIRT1-deacetylated XPA interacts with RPA2. Also involved in DNA repair of DNA double-strand breaks by homologous recombination and specifically single-strand annealing independently of XRCC6/Ku70 and NBN. Promotes DNA double-strand breaks by mediating deacetylation of SIRT6. Transcriptional suppression of XPC probably involves an E2F4:RBL2 suppressor complex and protein kinase B (AKT) signaling. Transcriptional suppression of TP73 probably involves E2F4 and PCAF. Deacetylates WRN thereby regulating its helicase and exonuclease activities and regulates WRN nuclear translocation in response to DNA damage. Deacetylates APEX1 at 'Lys-6' and 'Lys-7' and stimulates cellular AP endonuclease activity by promoting the association of APEX1 to XRCC1. Catalyzes deacetylation of ERCC4/XPF, thereby impairing interaction with ERCC1 and nucleotide excision repair (NER). Increases p53/TP53-mediated transcription-independent apoptosis by blocking nuclear translocation of cytoplasmic p53/TP53 and probably redirecting it to mitochondria. Deacetylates XRCC6/Ku70 at 'Lys-539' and 'Lys-542' causing it to sequester BAX away from mitochondria thereby inhibiting stress-induced apoptosis. Is involved in autophagy, presumably by deacetylating ATG5, ATG7 and MAP1LC3B/ATG8. Deacetylates AKT1 which leads to enhanced binding of AKT1 and PDK1 to PIP3 and promotes their activation. Proposed to play role in regulation of STK11/LBK1-dependent AMPK signaling pathways implicated in cellular senescence which seems to involve the regulation of the acetylation status of STK11/LBK1. Can deacetylate STK11/LBK1 and thereby increase its activity, cytoplasmic localization and association with STRAD; however, the relevance of such activity in normal cells is unclear. In endothelial cells is shown to inhibit STK11/LBK1 activity and to promote its degradation. Deacetylates SMAD7 at 'Lys-64' and 'Lys-70' thereby promoting its degradation. Deacetylates CIITA and augments its MHC class II transactivation and contributes to its stability. Deacetylates MECOM/EVI1. Deacetylates PML at 'Lys-487' and this deacetylation promotes PML control of PER2 nuclear localization. During the neurogenic transition, represses selective NOTCH1-target genes through histone deacetylation in a BCL6-dependent manner and leading to neuronal differentiation. Regulates the circadian expression of several core clock genes, including BMAL1, RORC, PER2 and CRY1 and plays a critical role in maintaining a controlled rhythmicity in histone acetylation, thereby contributing to circadian chromatin remodeling. Deacetylates BMAL1 and histones at the circadian gene promoters in order to facilitate repression by inhibitory components of the circadian oscillator. Deacetylates PER2, facilitating its ubiquitination and degradation by the proteasome. Protects cardiomyocytes against palmitate-induced apoptosis. Deacetylates XBP1 isoform 2; deacetylation decreases protein stability of XBP1 isoform 2 and inhibits its transcriptional activity. Deacetylates PCK1 and directs its activity toward phosphoenolpyruvate production promoting gluconeogenesis. Involved in the CCAR2-mediated regulation of PCK1 and NR1D1. Deacetylates CTNB1 at 'Lys-49'. In POMC (pro-opiomelanocortin) neurons, required for leptin-induced activation of PI3K signaling. Deacetylates SOX9; promoting SOX9 nuclear localization and transactivation activity. Involved in the regulation of centrosome duplication: deacetylates CENATAC in G1 phase, allowing for SASS6 accumulation on the centrosome and subsequent procentriole assembly. Deacetylates NDC80/HEC1. In addition to protein deacetylase activity, also acts as a protein-lysine deacylase by mediating protein delactylation, depropionylation and decrotonylation. Mediates depropionylation of Osterix (SP7). Catalyzes decrotonylation of histones; it however does not represent a major histone decrotonylase. Mediates protein delactylation of TEAD1 and YAP1. Deacetylates 'Lys-382' of p53/TP53, however with lower activity than isoform 1. In combination, the two isoforms exert an additive effect. Isoform 2 regulates p53/TP53 expression and cellular stress response and is in turn repressed by p53/TP53 presenting a SIRT1 isoform-dependent auto-regulatory loop. Functionally, catalytically inactive 75SirT1 may be involved in regulation of apoptosis. May be involved in protecting chondrocytes from apoptotic death by associating with cytochrome C and interfering with apoptosome assembly. In terms of biological role, (Microbial infection) In case of HIV-1 infection, interacts with and deacetylates the viral Tat protein. The viral Tat protein inhibits SIRT1 deacetylation activity toward RELA/NF-kappa-B p65, thereby potentiates its transcriptional activity and SIRT1 is proposed to contribute to T-cell hyperactivation during infection. The sequence is that of NAD-dependent protein deacetylase sirtuin-1 from Homo sapiens (Human).